Reading from the N-terminus, the 94-residue chain is uncharacterized protein (94 aa).

A signal peptide spans M1–A22.

This is an uncharacterized protein from Escherichia coli (strain K12).